A 430-amino-acid polypeptide reads, in one-letter code: Enolase (430 aa).

Q167 lines the (2R)-2-phosphoglycerate pocket. E209 functions as the Proton donor in the catalytic mechanism. Mg(2+)-binding residues include D246, E289, and D316. Residues K341, R370, S371, and K392 each coordinate (2R)-2-phosphoglycerate. K341 functions as the Proton acceptor in the catalytic mechanism.

It belongs to the enolase family. In terms of assembly, component of the RNA degradosome, a multiprotein complex involved in RNA processing and mRNA degradation. Mg(2+) serves as cofactor.

Its subcellular location is the cytoplasm. The protein localises to the secreted. The protein resides in the cell surface. It carries out the reaction (2R)-2-phosphoglycerate = phosphoenolpyruvate + H2O. It participates in carbohydrate degradation; glycolysis; pyruvate from D-glyceraldehyde 3-phosphate: step 4/5. Functionally, catalyzes the reversible conversion of 2-phosphoglycerate (2-PG) into phosphoenolpyruvate (PEP). It is essential for the degradation of carbohydrates via glycolysis. The chain is Enolase from Idiomarina loihiensis (strain ATCC BAA-735 / DSM 15497 / L2-TR).